The chain runs to 227 residues: Cytidylate kinase (227 aa).

An ATP-binding site is contributed by 12–20; the sequence is GPSGAGKGT.

Belongs to the cytidylate kinase family. Type 1 subfamily.

It is found in the cytoplasm. The enzyme catalyses CMP + ATP = CDP + ADP. It catalyses the reaction dCMP + ATP = dCDP + ADP. The polypeptide is Cytidylate kinase (Citrobacter koseri (strain ATCC BAA-895 / CDC 4225-83 / SGSC4696)).